Consider the following 337-residue polypeptide: Transcription initiation factor IIB (337 aa).

A TFIIB-type zinc finger spans residues 37–68 (EKAVCPECGSRNLVHDYERAELVCGDCGLVID). 4 residues coordinate Zn(2+): C41, C44, C60, and C63. A run of 2 repeats spans residues 154–237 (SELD…SREL) and 248–329 (DYVP…ELAE).

This sequence belongs to the TFIIB family.

Functionally, stabilizes TBP binding to an archaeal box-A promoter. Also responsible for recruiting RNA polymerase II to the pre-initiation complex (DNA-TBP-TFIIB). This is Transcription initiation factor IIB from Methanosarcina mazei (Methanosarcina frisia).